We begin with the raw amino-acid sequence, 231 residues long: Large ribosomal subunit protein uL3 (231 aa).

N5-methylglutamine is present on Q151.

Belongs to the universal ribosomal protein uL3 family. In terms of assembly, part of the 50S ribosomal subunit. Forms a cluster with proteins L14 and L19. Post-translationally, methylated by PrmB.

Its function is as follows. One of the primary rRNA binding proteins, it binds directly near the 3'-end of the 23S rRNA, where it nucleates assembly of the 50S subunit. In Ehrlichia canis (strain Jake), this protein is Large ribosomal subunit protein uL3.